Here is a 260-residue protein sequence, read N- to C-terminus: Zinc finger protein 575 (260 aa).

The tract at residues 22 to 81 (PGLGPGRWLLPGAHQPSCPPAPHQGPLQKPSQSAPGPTASASAPPRPRRRPPPQRPHRCP) is disordered. A compositionally biased stretch (low complexity) spans 51-64 (PSQSAPGPTASASA). Over residues 67–78 (RPRRRPPPQRPH) the composition is skewed to basic residues. 6 C2H2-type zinc fingers span residues 78–100 (HRCPDCDKAFSYPSKLATHRLAH), 106–128 (HPCPDCPKAFSYPSKLAAHRLTH), 134–156 (HPCPHCPKAFGHRSKLAAHLWTH), 162–184 (YPCPDCPKSFCYPSKLAAHRHTH), 192–214 (YPCPHCPKAFSFPSKLAAHRLCH), and 228–255 (HRCSSCGQAFGQRRLLLLHQRSHHQVEH).

The protein belongs to the krueppel C2H2-type zinc-finger protein family.

The protein resides in the nucleus. Its function is as follows. May be involved in transcriptional regulation. The protein is Zinc finger protein 575 (ZNF575) of Macaca fascicularis (Crab-eating macaque).